The chain runs to 596 residues: Protein kinase C iota type (596 aa).

Polar residues predominate over residues 1–12; it reads MPTQRDSSTMSH. A disordered region spans residues 1 to 21; sequence MPTQRDSSTMSHTVACGGGGD. Position 2 is an N-acetylproline (P2). Residues 2-28 are required for interaction with RAB2; it reads PTQRDSSTMSHTVACGGGGDHSHQVRV. Residues 2-253 form a regulatory domain region; it reads PTQRDSSTMS…KASSSLGLQD (252 aa). Position 3 is a phosphothreonine (T3). 2 positions are modified to phosphoserine: S7 and S8. The residue at position 9 (T9) is a Phosphothreonine. Positions 25 to 108 constitute a PB1 domain; sequence QVRVKAYYRG…SELLIHVFPC (84 aa). The tract at residues 72 to 91 is interaction with PARD6A; it reads DEEGDPCTVSSQLELEEAFR. A Pseudosubstrate motif is present at residues 125 to 134; that stretch reads YRRGARRWRK. Residues 140 to 190 form a Phorbol-ester/DAG-type zinc finger; it reads GHTFQAKRFNRRAHCAICTDRIWGLGRQGYKCINCKLLVHKKCHKLVTIEC. Residues 254-522 enclose the Protein kinase domain; the sequence is FDLLRVIGRG…FADIQGHPFF (269 aa). 260 to 268 contacts ATP; that stretch reads IGRGSYAKV. Phosphotyrosine; by SRC occurs at positions 265 and 280. K283 serves as a coordination point for ATP. Y334 carries the phosphotyrosine; by SRC modification. D378 functions as the Proton acceptor in the catalytic mechanism. T412 is subject to Phosphothreonine; by PDPK1. The AGC-kinase C-terminal domain occupies 523-594; sequence RNVDWDMMEQ…INPLLMSAEE (72 aa). T564 carries the post-translational modification Phosphothreonine.

Belongs to the protein kinase superfamily. AGC Ser/Thr protein kinase family. PKC subfamily. As to quaternary structure, forms a complex with SQSTM1 and MP2K5. Interacts directly with SQSTM1. Interacts with IKBKB. Interacts with PARD6A, PARD6B and PARD6G. Part of a quaternary complex containing aPKC, PARD3, a PARD6 protein (PARD6A, PARD6B or PARD6G) and a GTPase protein (CDC42 or RAC1). Part of a complex with LLGL1 and PARD6B. Interacts with ADAP1/CENTA1. Interaction with SMG1, through the ZN-finger domain, activates the kinase activity. Interacts with CDK7. Forms a complex with RAB2A and GAPDH involved in recruitment onto the membrane of vesicular tubular clusters (VTCs). Interacts with ECT2 ('Thr-359' phosphorylated form). Interacts with VAMP2. Interacts with WDFY2 (via WD repeats 1-3). Post-translationally, phosphorylation at Thr-412 in the activation loop is not mandatory for activation. Upon neuronal growth factor (NGF) stimulation, phosphorylated by SRC at Tyr-265, Tyr-280 and Tyr-334. Phosphorylation at Tyr-265 facilitates binding to KPNB1/importin-beta regulating entry of PRKCI into the nucleus. Phosphorylation on Tyr-334 is important for NF-kappa-B stimulation. Phosphorylated at Thr-564 during the initial phase of long term potentiation. Expressed in dorsal hippocampus (at protein level).

The protein localises to the cytoplasm. Its subcellular location is the membrane. It localises to the endosome. The protein resides in the nucleus. It catalyses the reaction L-seryl-[protein] + ATP = O-phospho-L-seryl-[protein] + ADP + H(+). It carries out the reaction L-threonyl-[protein] + ATP = O-phospho-L-threonyl-[protein] + ADP + H(+). Its activity is regulated as follows. Atypical PKCs (PRKCI and PRKCZ) exhibit an elevated basal enzymatic activity (that may be due to the interaction with SMG1 or SQSTM1) and are not regulated by diacylglycerol, phosphatidylserine, phorbol esters or calcium ions. Two specific sites, Thr-412 (activation loop of the kinase domain) and Thr-564 (turn motif), need to be phosphorylated for its full activation. Might also be a target for novel lipid activators that are elevated during nutrient-stimulated insulin secretion. Its function is as follows. Calcium- and diacylglycerol-independent serine/ threonine-protein kinase that plays a general protective role against apoptotic stimuli, is involved in NF-kappa-B activation, cell survival, differentiation and polarity, and contributes to the regulation of microtubule dynamics in the early secretory pathway. Is necessary for BCR-ABL oncogene-mediated resistance to apoptotic drug in leukemia cells, protecting leukemia cells against drug-induced apoptosis. In cultured neurons, prevents amyloid beta protein-induced apoptosis by interrupting cell death process at a very early step. In glioblastoma cells, may function downstream of phosphatidylinositol 3-kinase (PI3K) and PDPK1 in the promotion of cell survival by phosphorylating and inhibiting the pro-apoptotic factor BAD. Can form a protein complex in non-small cell lung cancer (NSCLC) cells with PARD6A and ECT2 and regulate ECT2 oncogenic activity by phosphorylation, which in turn promotes transformed growth and invasion. In response to nerve growth factor (NGF), acts downstream of SRC to phosphorylate and activate IRAK1, allowing the subsequent activation of NF-kappa-B and neuronal cell survival. Functions in the organization of the apical domain in epithelial cells by phosphorylating EZR. This step is crucial for activation and normal distribution of EZR at the early stages of intestinal epithelial cell differentiation. Forms a protein complex with LLGL1 and PARD6B independently of PARD3 to regulate epithelial cell polarity. Plays a role in microtubule dynamics in the early secretory pathway through interaction with RAB2A and GAPDH and recruitment to vesicular tubular clusters (VTCs). In human coronary artery endothelial cells (HCAEC), is activated by saturated fatty acids and mediates lipid-induced apoptosis. Downstream of PI3K is required for insulin-stimulated glucose transport. Activates RAB4A and promotes its association with KIF3A which is required for the insulin-induced SLC2A4/GLUT4 translocation in adipocytes. Is essential in early embryogenesis and development of differentiating photoreceptors by playing a role in the establishment of epithelial and neuronal polarity. Involved in early synaptic long term potentiation phase in CA1 hippocampal cells and short term memory formation. In Rattus norvegicus (Rat), this protein is Protein kinase C iota type (Prkci).